We begin with the raw amino-acid sequence, 4062 residues long: Transcription-associated protein 1 (4062 aa).

The segment at Leu531–Ser562 is disordered. 2 TPR repeats span residues Leu1346–Ile1379 and Arg1677–Glu1714. Over residues Val2659–Pro2670 the composition is skewed to basic and acidic residues. Residues Val2659–Glu2692 are disordered. Residues Met2671–Asp2680 are compositionally biased toward acidic residues. Basic and acidic residues predominate over residues Asp2681–Glu2692. One can recognise an FAT domain in the interval Leu2800–Val3411. Residues Ile2847–Met2880 form a TPR 3 repeat. Positions Glu3682–Lys4046 constitute a PI3K/PI4K catalytic domain. A G-loop region spans residues Val3688 to Val3694. Residues Asn3902–Gln3910 form a catalytic loop region. Residues Asn3922–Thr3950 form an activation loop region. The region spanning Ala4031–Phe4062 is the FATC domain.

The protein belongs to the PI3/PI4-kinase family. TRA1 subfamily. In terms of assembly, interacts with histone acetyltransferase Tip60 homolog mys-1. Probably a component of a complex with histone acetyltransferase (HAT) activity, at least composed of mys-1 and trr-1. In terms of tissue distribution, expressed in germ cells and somatic cells.

It is found in the nucleus. The protein localises to the chromosome. Functionally, influences germ cell fate in hermaphrodites. Acts downstream of tra-2 and tra-3 and through the Tip60 histone acetyltransferase complex to regulate germ cell fate decisions. Required for spermatogenesis and embryonic development. Acts with tra-2 to promote expression of fog-3 and control male tail development. Involved in the negative regulation of vulval development. Involved in the positive regulation of transcription factor daf-16, probably acting by histone acetylation; thereby modulating stress resistance. Plays a role in acetylation of nucleosomal histone H4, probably acting as a component of the Tip60 histone acetyltransferase complex. The protein is Transcription-associated protein 1 of Caenorhabditis elegans.